A 38-amino-acid chain; its full sequence is Potassium channel toxin alpha-KTx 3.8 (38 aa).

Intrachain disulfides connect C8/C28, C14/C33, and C18/C35. An interaction with Ca(2+)-activated K(+) channels region spans residues 26 to 33 (GKCMNGKC).

In terms of tissue distribution, expressed by the venom gland.

It localises to the secreted. In terms of biological role, potassium channel inhibitor. This Hottentotta tamulus sindicus (Scorpion) protein is Potassium channel toxin alpha-KTx 3.8.